The chain runs to 1084 residues: Autophagy-related protein 11 (1084 aa).

2 coiled-coil regions span residues 585-739 (VQNL…LTES) and 847-879 (VIRR…TNDK). Disordered regions lie at residues 925 to 961 (SMIP…NMNR) and 973 to 1007 (NIGS…STNA). Composition is skewed to low complexity over residues 940–949 (SNTNNSNPSS) and 973–993 (NIGS…NGNN). Over residues 994 to 1007 (KPETNIDTTSSTNA) the composition is skewed to polar residues.

This sequence belongs to the ATG11 family. In terms of assembly, homodimer and potential homooligomers. Interacts with ATG1 kinase and the ATG19 and ATG34 cargo protein transporters. Interacts with ATG9, ATG17 and ATG20.

The protein resides in the preautophagosomal structure membrane. It is found in the vacuole membrane. Its function is as follows. Involved in cytoplasm to vacuole transport (Cvt), pexophagy, mitophagy and nucleophagy. Recruits mitochondria for their selective degradation via autophagy (mitophagy) during starvation, through its interaction with ATG32. Works as scaffold proteins that recruit ATG proteins to the pre-autophagosome (PAS), the site of vesicle/autophagosome formation. Required for ATG9 anterograde transport from the mitochondria to the PAS. Also recruits the ATG19-prAPE1 complex to the PAS. Required for the Cvt vesicles completion. The sequence is that of Autophagy-related protein 11 from Kluyveromyces marxianus (strain DMKU3-1042 / BCC 29191 / NBRC 104275) (Yeast).